Here is a 312-residue protein sequence, read N- to C-terminus: L-lactate dehydrogenase (312 aa).

Residues Val-11, Asp-32, Arg-37, and 76–77 (GA) contribute to the NAD(+) site. Residues Gln-79, Arg-85, and 117-120 (NPVD) each bind substrate. NAD(+)-binding positions include 115–117 (VSN) and Thr-140. 145–148 (DTAR) is a substrate binding site. Positions 150 and 165 each coordinate beta-D-fructose 1,6-bisphosphate. His-172 (proton acceptor) is an active-site residue. Tyr-217 carries the post-translational modification Phosphotyrosine. Position 226 (Thr-226) interacts with substrate.

Belongs to the LDH/MDH superfamily. LDH family. Homotetramer.

It localises to the cytoplasm. The catalysed reaction is (S)-lactate + NAD(+) = pyruvate + NADH + H(+). It functions in the pathway fermentation; pyruvate fermentation to lactate; (S)-lactate from pyruvate: step 1/1. With respect to regulation, allosterically activated by fructose 1,6-bisphosphate (FBP). Functionally, catalyzes the conversion of lactate to pyruvate. This is L-lactate dehydrogenase from Pseudothermotoga lettingae (strain ATCC BAA-301 / DSM 14385 / NBRC 107922 / TMO) (Thermotoga lettingae).